The primary structure comprises 795 residues: Phenylalanine--tRNA ligase beta subunit (795 aa).

The tRNA-binding domain maps to 39–148; that stretch reads ADEFHTVVVG…ADAPVGEDYR (110 aa). The B5 domain maps to 401-476; that stretch reads PKRDGITLRA…RVYGYNSIQA (76 aa). Residues aspartate 454, aspartate 460, glutamate 463, and glutamate 464 each coordinate Mg(2+). Residues 701-794 form the FDX-ACB domain; it reads SRYPSIRRDL…LKSEFNATLR (94 aa).

The protein belongs to the phenylalanyl-tRNA synthetase beta subunit family. Type 1 subfamily. In terms of assembly, tetramer of two alpha and two beta subunits. Requires Mg(2+) as cofactor.

It is found in the cytoplasm. It carries out the reaction tRNA(Phe) + L-phenylalanine + ATP = L-phenylalanyl-tRNA(Phe) + AMP + diphosphate + H(+). The chain is Phenylalanine--tRNA ligase beta subunit from Idiomarina loihiensis (strain ATCC BAA-735 / DSM 15497 / L2-TR).